The primary structure comprises 1483 residues: Heme-responsive zinc finger transcription factor HAP1 (1483 aa).

The segment covering 1-50 (MSNTPYNSSVPSIASMTQSSVSRSPNMHTATTPGANTSSNSPPLHMSSDS) has biased composition (polar residues). Residues 1–56 (MSNTPYNSSVPSIASMTQSSVSRSPNMHTATTPGANTSSNSPPLHMSSDSSKIKRK) form a disordered region. Residues Cys-64, Cys-67, Cys-74, Cys-81, Cys-84, and Cys-93 each contribute to the Zn(2+) site. Positions 64 to 93 (CTICRKRKVKCDKLRPHCQQCTKTGVAHLC) form a DNA-binding region, zn(2)-C6 fungal-type. A coiled-coil region spans residues 105–134 (EKELLKDNELKKLRERVKSLEKTLSKVHSS). Residues 126-208 (KTLSKVHSSP…ANSSSLSISN (83 aa)) form a disordered region. The span at 130–142 (KVHSSPSSNSLKS) shows a compositional bias: low complexity. Polar residues-rich tracts occupy residues 143–152 (YNTPESSNLF) and 160–176 (TLVN…SHMH). Over residues 177-208 (QQQQQQQQQEQQQDFSRSANANANSSSLSISN) the composition is skewed to low complexity. The segment at 244-444 (KGDPYLKLLW…NTIPHHQPQS (201 aa)) is heme-responsive; required for HMC formation. HRM repeat units lie at residues 280–285 (KCPINH), 299–304 (KCPVDH), 323–328 (KCPVDH), 347–352 (RCPVDH), 389–394 (KCPVDH), and 415–420 (RCPIDH). 2 stretches are compositionally biased toward polar residues: residues 432-447 (STHN…SGSH) and 706-734 (QLNA…NPTL). Disordered stretches follow at residues 432-458 (STHN…NRKH) and 706-767 (QLNA…KENQ). Over residues 735–759 (NNNMSAATTNSSSRSGSADSRSGSN) the composition is skewed to low complexity. The HRM 7 repeat unit spans residues 1192-1197 (KCPVYQ).

In terms of assembly, binds DNA as a homodimer. Interacts with SRO9 and YDJ1. In the absence of heme, binds to at least four cellular proteins, including YDJ1 and SRO9, forming a high-molecular-weight complex (HMC) which results in repression of its activity and dictates its DNA-binding specificity.

It localises to the nucleus. In terms of biological role, regulation of oxygen dependent gene expression. It modulates the expression of Iso-1 (CYP1) and Iso-2 (CYP3) cytochrome c. In response to heme, promotes transcription of genes encoding functions required for respiration, controlling oxidative damage and repression of anaerobic genes. Binds to the sequence 5'-CGGNNNTNNCGG-3'. This chain is Heme-responsive zinc finger transcription factor HAP1 (HAP1), found in Saccharomyces cerevisiae (strain Lalvin EC1118 / Prise de mousse) (Baker's yeast).